The primary structure comprises 300 residues: Hydroxyquinol 1,2-dioxygenase (300 aa).

Residues Tyr-167, Tyr-200, His-224, and His-226 each coordinate Fe cation.

This sequence belongs to the intradiol ring-cleavage dioxygenase family. It depends on Fe(3+) as a cofactor.

The catalysed reaction is benzene-1,2,4-triol + O2 = maleylacetate + 2 H(+). The protein operates within aromatic compound metabolism. It participates in xenobiotic degradation. In terms of biological role, involved in the degradation of para-nitrophenol (4-NP). Catalyzes the conversion of hydroxyquinol to malelylacetate. The sequence is that of Hydroxyquinol 1,2-dioxygenase (npcC) from Rhodococcus opacus (Nocardia opaca).